The sequence spans 147 residues: UPF0306 protein YhbP (147 aa).

It belongs to the UPF0306 family.

The polypeptide is UPF0306 protein YhbP (Shigella sonnei (strain Ss046)).